A 296-amino-acid chain; its full sequence is Cytochrome bc1 complex cytochrome c subunit (296 aa).

A compositionally biased stretch (polar residues) spans 1-19 (MMETNPQTSEGAGKAQSSA). The segment at 1–27 (MMETNPQTSEGAGKAQSSAKKVKNRRK) is disordered. A helical transmembrane segment spans residues 32-52 (VAGAMALTIGLSGAGILATAI). Cytochrome c domains are found at residues 67–147 (ALIA…AANG) and 177–255 (LDVS…KSTK). Heme c-binding residues include cysteine 80, cysteine 83, histidine 84, cysteine 190, cysteine 193, and histidine 194. The helical transmembrane segment at 274–294 (GLFMWGIGIMVLIAAAMWIGS) threads the bilayer.

In terms of assembly, the cytochrome bc1 complex is composed of a cytochrome b (QcrB), the Rieske iron-sulfur protein (QcrA) and a diheme cytochrome c (QcrC) subunit. The bc1 complex forms a supercomplex with cytochrome c oxidase (cytochrome aa3). In terms of processing, binds 2 heme c groups covalently per subunit.

Its subcellular location is the cell membrane. It carries out the reaction a quinol + 2 Fe(III)-[cytochrome c](out) = a quinone + 2 Fe(II)-[cytochrome c](out) + 2 H(+)(out). In terms of biological role, cytochrome c1 subunit of the cytochrome bc1 complex, an essential component of the respiratory electron transport chain required for ATP synthesis. The bc1 complex catalyzes the oxidation of menaquinol and the reduction of cytochrome c in the respiratory chain. The bc1 complex operates through a Q-cycle mechanism that couples electron transfer to generation of the proton gradient that drives ATP synthesis. This chain is Cytochrome bc1 complex cytochrome c subunit (qcrC), found in Corynebacterium efficiens (strain DSM 44549 / YS-314 / AJ 12310 / JCM 11189 / NBRC 100395).